A 96-amino-acid chain; its full sequence is MAKINEEQVRHVAHLARLAVTDEEVQQFTVQLEKILGFAEQLNELDTTGIEPTTHVLDLKNVLRKDEVRPSLPRTEVERLAPDWEDGQVRVPAVFE.

Belongs to the GatC family. In terms of assembly, heterotrimer of A, B and C subunits.

The catalysed reaction is L-glutamyl-tRNA(Gln) + L-glutamine + ATP + H2O = L-glutaminyl-tRNA(Gln) + L-glutamate + ADP + phosphate + H(+). It carries out the reaction L-aspartyl-tRNA(Asn) + L-glutamine + ATP + H2O = L-asparaginyl-tRNA(Asn) + L-glutamate + ADP + phosphate + 2 H(+). Functionally, allows the formation of correctly charged Asn-tRNA(Asn) or Gln-tRNA(Gln) through the transamidation of misacylated Asp-tRNA(Asn) or Glu-tRNA(Gln) in organisms which lack either or both of asparaginyl-tRNA or glutaminyl-tRNA synthetases. The reaction takes place in the presence of glutamine and ATP through an activated phospho-Asp-tRNA(Asn) or phospho-Glu-tRNA(Gln). The chain is Aspartyl/glutamyl-tRNA(Asn/Gln) amidotransferase subunit C from Exiguobacterium sibiricum (strain DSM 17290 / CCUG 55495 / CIP 109462 / JCM 13490 / 255-15).